A 70-amino-acid polypeptide reads, in one-letter code: NAD(P)H-quinone oxidoreductase subunit O (70 aa).

The protein belongs to the complex I NdhO subunit family. NDH-1 can be composed of about 15 different subunits; different subcomplexes with different compositions have been identified which probably have different functions.

It is found in the cellular thylakoid membrane. The enzyme catalyses a plastoquinone + NADH + (n+1) H(+)(in) = a plastoquinol + NAD(+) + n H(+)(out). It catalyses the reaction a plastoquinone + NADPH + (n+1) H(+)(in) = a plastoquinol + NADP(+) + n H(+)(out). In terms of biological role, NDH-1 shuttles electrons from an unknown electron donor, via FMN and iron-sulfur (Fe-S) centers, to quinones in the respiratory and/or the photosynthetic chain. The immediate electron acceptor for the enzyme in this species is believed to be plastoquinone. Couples the redox reaction to proton translocation, and thus conserves the redox energy in a proton gradient. Cyanobacterial NDH-1 also plays a role in inorganic carbon-concentration. In Trichormus variabilis (strain ATCC 29413 / PCC 7937) (Anabaena variabilis), this protein is NAD(P)H-quinone oxidoreductase subunit O.